The sequence spans 42 residues: Photosystem II reaction center protein J (42 aa).

Residues 10-30 traverse the membrane as a helical segment; sequence IPLWLVGTVVGIAALTLLSVF.

This sequence belongs to the PsbJ family. In terms of assembly, PSII is composed of 1 copy each of membrane proteins PsbA, PsbB, PsbC, PsbD, PsbE, PsbF, PsbH, PsbI, PsbJ, PsbK, PsbL, PsbM, PsbT, PsbX, PsbY, PsbZ, Psb30/Ycf12, at least 3 peripheral proteins of the oxygen-evolving complex and a large number of cofactors. It forms dimeric complexes.

The protein resides in the plastid. It is found in the chloroplast thylakoid membrane. In terms of biological role, one of the components of the core complex of photosystem II (PSII). PSII is a light-driven water:plastoquinone oxidoreductase that uses light energy to abstract electrons from H(2)O, generating O(2) and a proton gradient subsequently used for ATP formation. It consists of a core antenna complex that captures photons, and an electron transfer chain that converts photonic excitation into a charge separation. In Tupiella akineta (Green alga), this protein is Photosystem II reaction center protein J.